The following is a 164-amino-acid chain: Transcriptional regulator MraZ (164 aa).

SpoVT-AbrB domains lie at 7 to 63 and 92 to 135; these read REQH…EPAV and LDQL…NPDR.

This sequence belongs to the MraZ family. Forms oligomers.

It is found in the cytoplasm. It localises to the nucleoid. In Chlorobaculum parvum (strain DSM 263 / NCIMB 8327) (Chlorobium vibrioforme subsp. thiosulfatophilum), this protein is Transcriptional regulator MraZ.